The chain runs to 558 residues: FRIGIDA-like protein 3 (558 aa).

A coiled-coil region spans residues 9–102 (SLMDSTSSKI…ALERLQKKRD (94 aa)). Residues 454–463 (AKADKKRATE) show a composition bias toward basic and acidic residues. Residues 454-494 (AKADKKRATEPMKPQPKRPRGAQPRVTDNNNNINNNKTGYG) are disordered.

It belongs to the Frigida family.

This is FRIGIDA-like protein 3 (FRL3) from Arabidopsis thaliana (Mouse-ear cress).